A 370-amino-acid polypeptide reads, in one-letter code: Cytochrome b (370 aa).

4 consecutive transmembrane segments (helical) span residues 25–45 (FGSM…FLAV), 69–90 (WLMQ…YIHI), 105–125 (WLSG…GYVL), and 170–190 (FFAL…LHIM). Heme b is bound by residues His75 and His89. 2 residues coordinate heme b: His174 and His188. His193 contacts a ubiquinone. 4 helical membrane-spanning segments follow: residues 218–238 (YKDL…VSFF), 280–300 (LGGA…PFTH), 312–332 (FMQL…WTAT), and 339–358 (FTTI…ISNP).

This sequence belongs to the cytochrome b family. The cytochrome bc1 complex contains 3 respiratory subunits (MT-CYB, CYC1 and UQCRFS1), 2 core proteins (UQCRC1 and UQCRC2) and probably 6 low-molecular weight proteins. Heme b serves as cofactor.

It localises to the mitochondrion inner membrane. In terms of biological role, component of the ubiquinol-cytochrome c reductase complex (complex III or cytochrome b-c1 complex) that is part of the mitochondrial respiratory chain. The b-c1 complex mediates electron transfer from ubiquinol to cytochrome c. Contributes to the generation of a proton gradient across the mitochondrial membrane that is then used for ATP synthesis. This is Cytochrome b (MT-CYB) from Chilabothrus fordii (Ford's boa).